A 284-amino-acid polypeptide reads, in one-letter code: Bifunctional protein FolD (284 aa).

Residues 163-165 (GRS) and Ser-188 contribute to the NADP(+) site.

This sequence belongs to the tetrahydrofolate dehydrogenase/cyclohydrolase family. As to quaternary structure, homodimer.

The enzyme catalyses (6R)-5,10-methylene-5,6,7,8-tetrahydrofolate + NADP(+) = (6R)-5,10-methenyltetrahydrofolate + NADPH. It catalyses the reaction (6R)-5,10-methenyltetrahydrofolate + H2O = (6R)-10-formyltetrahydrofolate + H(+). The protein operates within one-carbon metabolism; tetrahydrofolate interconversion. Catalyzes the oxidation of 5,10-methylenetetrahydrofolate to 5,10-methenyltetrahydrofolate and then the hydrolysis of 5,10-methenyltetrahydrofolate to 10-formyltetrahydrofolate. The chain is Bifunctional protein FolD from Lactococcus lactis subsp. lactis (strain IL1403) (Streptococcus lactis).